The chain runs to 796 residues: AUGMIN subunit 5 (796 aa).

Residues 79 to 120 (HGGSSNASIGSSVNPGKEESKSKGRRKDKTVTGESSSYAEDR) are disordered. The span at 80-92 (GGSSNASIGSSVN) shows a compositional bias: polar residues. Coiled-coil stretches lie at residues 115 to 191 (SYAE…EATR) and 462 to 501 (GKER…LKKK).

Belongs to the HAUS5 family. In terms of assembly, part of the augmin complex composed of 8 subunits. The complex acts on microtubules and interacts with gamma-tubulin in spindles and the phragmoplast.

Its subcellular location is the cytoplasm. It localises to the cytoskeleton. It is found in the spindle. The protein resides in the phragmoplast. Involved in microtubules reorganization during spindle and phragmoplast development. In Arabidopsis thaliana (Mouse-ear cress), this protein is AUGMIN subunit 5.